Reading from the N-terminus, the 649-residue chain is Cysteine-rich receptor-like protein kinase 2 (649 aa).

The N-terminal stretch at 1–29 (MKKEPVHILPLYLPCLLMFLLSSLRQITG) is a signal peptide. Residues 30–258 (DARARAVKVT…IPRNGRSRGS (229 aa)) lie on the Extracellular side of the membrane. Gnk2-homologous domains lie at 33-134 (ARAV…NYSF) and 139-245 (KGPE…DQDF). Residues Asn47, Asn131, Asn149, Asn154, and Asn214 are each glycosylated (N-linked (GlcNAc...) asparagine). The chain crosses the membrane as a helical span at residues 259-279 (VVVIVVSVLSSVVVFMIGVAV). Residues 280–649 (SVYICKRRTI…TVSQSSFYGR (370 aa)) lie on the Cytoplasmic side of the membrane. The 284-residue stretch at 325–608 (FDNANKLGQG…HMLKNKEEVL (284 aa)) folds into the Protein kinase domain. ATP-binding positions include 331–339 (LGQGGFGTV) and Lys353. Tyr398 is modified (phosphotyrosine). The active-site Proton acceptor is the Asp450. Phosphoserine occurs at positions 454 and 483. Phosphothreonine is present on residues Thr484 and Thr489. A Phosphotyrosine modification is found at Tyr497.

Belongs to the protein kinase superfamily. Ser/Thr protein kinase family. CRK subfamily.

It is found in the membrane. The enzyme catalyses L-seryl-[protein] + ATP = O-phospho-L-seryl-[protein] + ADP + H(+). The catalysed reaction is L-threonyl-[protein] + ATP = O-phospho-L-threonyl-[protein] + ADP + H(+). The sequence is that of Cysteine-rich receptor-like protein kinase 2 (CRK2) from Arabidopsis thaliana (Mouse-ear cress).